A 226-amino-acid chain; its full sequence is MNVKKHKFPGVYTVIEDDGSERIATKNLVPGQKVYGERIVKWKGEEYRIWNPNRSKLAAAILNDLKNFPIKPGTTVLYLGIASGTTASHVSDIIGWEGKIFGIEFSPRVLRELVPLVEERRNIVPILGDATKPEEYRALVTKVDVIFEDVAQPTQAKILIDNAKAYLKSGGYGMISIKSRSIDVTKEPEEVFREVEKELSEYFEVVERISLEPYEKDHALIVVRKP.

S-adenosyl-L-methionine contacts are provided by residues 85–86 (TT), 104–105 (EF), 129–130 (DA), and 149–152 (DVAQ).

Belongs to the methyltransferase superfamily. Fibrillarin family. As to quaternary structure, interacts with nop5. Component of box C/D small ribonucleoprotein (sRNP) particles that contain rpl7ae, FlpA and nop5, plus a guide RNA.

In terms of biological role, involved in pre-rRNA and tRNA processing. Utilizes the methyl donor S-adenosyl-L-methionine to catalyze the site-specific 2'-hydroxyl methylation of ribose moieties in rRNA and tRNA. Site specificity is provided by a guide RNA that base pairs with the substrate. Methylation occurs at a characteristic distance from the sequence involved in base pairing with the guide RNA. The protein is Fibrillarin-like rRNA/tRNA 2'-O-methyltransferase of Thermococcus sibiricus (strain DSM 12597 / MM 739).